The sequence spans 129 residues: Small ribosomal subunit protein uS8 (129 aa).

The protein belongs to the universal ribosomal protein uS8 family. In terms of assembly, part of the 30S ribosomal subunit.

Its function is as follows. One of the primary rRNA binding proteins, it binds directly to 16S rRNA central domain where it helps coordinate assembly of the platform of the 30S subunit. This is Small ribosomal subunit protein uS8 from Picrophilus torridus (strain ATCC 700027 / DSM 9790 / JCM 10055 / NBRC 100828 / KAW 2/3).